Here is a 385-residue protein sequence, read N- to C-terminus: Serine/threonine-protein kinase 52 (385 aa).

A Protein kinase domain is found at 82–356 (LIIKTVLARG…PEMDEVVPML (275 aa)). Residues 88–96 (LARGTFGTV) and Lys109 each bind ATP. The active-site Proton acceptor is Asp227.

Belongs to the protein kinase superfamily. Ser/Thr protein kinase family. In terms of assembly, binds to CBC1. Associates with PHOT1, PHOT2, BLUS1 and PM H(+)-ATPase (e.g. AHA1). Autophosphorylated. Phosphorylated by HT1 in response to low CO(2) concentrations. In terms of tissue distribution, expressed in guard cells.

The protein resides in the cytoplasm. The protein localises to the cytosol. The catalysed reaction is L-seryl-[protein] + ATP = O-phospho-L-seryl-[protein] + ADP + H(+). The enzyme catalyses L-threonyl-[protein] + ATP = O-phospho-L-threonyl-[protein] + ADP + H(+). Its function is as follows. Serine/threonine protein kinase that phosphorylates proteins on serine and threonine residues. Collectively with CBC1, acts as a negative regulator of stomatal opening, probably via the inhibition of plasma membrane-type ATPases (AHA1 and AHA2) activity in guard cells, but in an abscisic acid (ABA)-independent manner. However, at low concentrations of CO(2), together with CBC1, stimulates stomatal opening via the inhibition of S-type anion channels in response to blue light (BL) and red light (RL), thus being a key component to maximize photosynthesis in the light under low CO(2) conditions. Required for temperature decrease in leaves. Downstream target of HIGH LEAF TEMPERATURE1 (HT1) during low CO(2)-induced stomatal opening. This chain is Serine/threonine-protein kinase 52, found in Arabidopsis thaliana (Mouse-ear cress).